The following is a 467-amino-acid chain: MASLLQSERVLYLVQGEKKVRAPLSQLYFCRYCSELRSLECVSHEVDSHYCPSCLENMPSAEAKLKKNRCANCFDCPGCMHTLSTRATSISTQLPDDPAKTTMKKAYYLACGFCRWTSRDVGMADKSVASGGWQEPENPHTQRMNKLIEYYQQLAQKEKVERDRKKLARRRNYMPLAFSQHTIHVVDKYSLGTRLQRPRAGASISTLAGLSLREGEDQKEVKIEPAQAVAEVEPLPEDYYTRPVNLTEVTTLQQRLLQPDLQPVSASQLYPRHKHLLIKRSLRCRKCEHNLSKPEFNPTSIKFKIQLVAVNYIPEVRIMSIPNLRYMKESQVLLTLTNPVENLTHVTLLECDEGDPDNINSTAKVVVPPKELILAGKDAAAEYDELAEPQDFQDDPDIVAFRKANKVGIFIKVTPQREEGEVTVCFKMKHDFKNLAAPIRPVEEGDQGTEVIWLTQHVELSFGPLLP.

Ala2 carries the post-translational modification N-acetylalanine. Residues 152 to 172 adopt a coiled-coil conformation; sequence QQLAQKEKVERDRKKLARRRN. The residue at position 203 (Ser203) is a Phosphoserine. Lys222 is covalently cross-linked (Glycyl lysine isopeptide (Lys-Gly) (interchain with G-Cter in SUMO2)). The residue at position 414 (Thr414) is a Phosphothreonine.

The protein belongs to the dynactin subunit 4 family. As to quaternary structure, subunit of dynactin, a multiprotein complex part of a tripartite complex with dynein and a adapter, such as BICDL1, BICD2 or HOOK3. The dynactin complex is built around ACTR1A/ACTB filament and consists of an actin-related filament composed of a shoulder domain, a pointed end and a barbed end. Its length is defined by its flexible shoulder domain. The soulder is composed of 2 DCTN1 subunits, 4 DCTN2 and 2 DCTN3. The 4 DCNT2 (via N-terminus) bind the ACTR1A filament and act as molecular rulers to determine the length. The pointed end is important for binding dynein-dynactin cargo adapters. Consists of 4 subunits: ACTR10, DCNT4, DCTN5 and DCTN6. The barbed end is composed of a CAPZA1:CAPZB heterodimers, which binds ACTR1A/ACTB filament and dynactin and stabilizes dynactin. Interacts with ATP7B, but not ATP7A, in a copper-dependent manner. Interacts with ANK2; this interaction is required for localization at costameres. Interacts with N4BP2L1.

The protein localises to the cytoplasm. It localises to the cytoskeleton. The protein resides in the microtubule organizing center. Its subcellular location is the centrosome. It is found in the stress fiber. The protein localises to the cell cortex. It localises to the myofibril. The protein resides in the sarcomere. In terms of biological role, part of the dynactin complex that activates the molecular motor dynein for ultra-processive transport along microtubules. In Mus musculus (Mouse), this protein is Dynactin subunit 4 (Dctn4).